Here is a 463-residue protein sequence, read N- to C-terminus: MAELQIRKKEKKSGDGIGTMVDFLLANARLVLGVGGAAMLGIATLAVKRLIDRATSPPSDKEAEEKAEQKSIEESWKEAVLKKASPTLRRKEDLEHHCAPLSLPDPSQKMPEATGTSQVKASDEIKKIPICFTLQERLLNYHTHHASVPEVQMEEARQLVLDIKKELQEFLHAKHPEMPFLALHLGGSFGNRLPMSCLDHACLIMPLVLEPDLWCVIPGQKTILSDPNFCMVKRIDLEYTSRGSSPWDRFLVGAYLSSRTMVQSLHKTIVGSINWPAIGTVLDCTIKPDITSDELKLEVVHPNGHMIIRILPMAVIKDADLLAHCCATAPAENLWQRSFYKKEVSRLQELDSSDSGIRLKCLQILKGICRDCPSLCHLNSTHLRHILLHLSTESSDWTETALADRFLQVLEELIGYLDKGFLPSYFNDKLNLFSSLKAEDIEELGYGLYQVFSEPDDVLKRER.

Over 1–24 (MAELQIRKKEKKSGDGIGTMVDFL) the chain is Mitochondrial intermembrane. Residues 25–47 (LANARLVLGVGGAAMLGIATLAV) form a helical membrane-spanning segment. Topologically, residues 48–463 (KRLIDRATSP…EPDDVLKRER (416 aa)) are cytoplasmic. The tract at residues 87-119 (TLRRKEDLEHHCAPLSLPDPSQKMPEATGTSQV) is disordered. Residues 89–98 (RRKEDLEHHC) are compositionally biased toward basic and acidic residues.

The protein belongs to the MID49/MID51 family.

It is found in the mitochondrion outer membrane. Its function is as follows. Mitochondrial outer membrane protein which regulates mitochondrial organization. It is required for mitochondrial fission and promotes the recruitment and association of the fission mediator dynamin-related protein 1 (DNM1L) to the mitochondrial surface independently of the mitochondrial fission FIS1 and MFF proteins. Regulates DNM1L GTPase activity. In Xenopus laevis (African clawed frog), this protein is Mitochondrial dynamics protein MID49 (mief2).